A 279-amino-acid polypeptide reads, in one-letter code: Large ribosomal subunit protein uL2 (279 aa).

2 disordered regions span residues 32–58 (SLLTPLPKKGGRNAHGRITARHQGGGH) and 223–279 (GVAM…RKRG). Composition is skewed to basic residues over residues 40–58 (KGGRNAHGRITARHQGGGH) and 269–279 (VRRRYATRKRG).

Belongs to the universal ribosomal protein uL2 family. Part of the 50S ribosomal subunit. Forms a bridge to the 30S subunit in the 70S ribosome.

Functionally, one of the primary rRNA binding proteins. Required for association of the 30S and 50S subunits to form the 70S ribosome, for tRNA binding and peptide bond formation. It has been suggested to have peptidyltransferase activity; this is somewhat controversial. Makes several contacts with the 16S rRNA in the 70S ribosome. The chain is Large ribosomal subunit protein uL2 from Salinispora tropica (strain ATCC BAA-916 / DSM 44818 / JCM 13857 / NBRC 105044 / CNB-440).